We begin with the raw amino-acid sequence, 370 residues long: Putative agmatine deiminase (370 aa).

Catalysis depends on C361, which acts as the Amidino-cysteine intermediate.

This sequence belongs to the agmatine deiminase family.

The enzyme catalyses agmatine + H2O = N-carbamoylputrescine + NH4(+). The protein is Putative agmatine deiminase of Shewanella baltica (strain OS155 / ATCC BAA-1091).